The primary structure comprises 391 residues: ATP phosphoribosyltransferase regulatory subunit (391 aa).

This sequence belongs to the class-II aminoacyl-tRNA synthetase family. HisZ subfamily. Heteromultimer composed of HisG and HisZ subunits.

It is found in the cytoplasm. It participates in amino-acid biosynthesis; L-histidine biosynthesis; L-histidine from 5-phospho-alpha-D-ribose 1-diphosphate: step 1/9. Required for the first step of histidine biosynthesis. May allow the feedback regulation of ATP phosphoribosyltransferase activity by histidine. The polypeptide is ATP phosphoribosyltransferase regulatory subunit (Clostridium kluyveri (strain ATCC 8527 / DSM 555 / NBRC 12016 / NCIMB 10680 / K1)).